We begin with the raw amino-acid sequence, 134 residues long: uncharacterized protein (134 aa).

Residues 59-92 (VSKPKRRSPHPHGNKAADKRKTTEKEPERKKRVG) form a disordered region. The span at 61–71 (KPKRRSPHPHG) shows a compositional bias: basic residues. Residues 73–87 (KAADKRKTTEKEPER) are compositionally biased toward basic and acidic residues.

This is an uncharacterized protein from Saccharomyces cerevisiae (strain ATCC 204508 / S288c) (Baker's yeast).